A 473-amino-acid polypeptide reads, in one-letter code: MSFTVAIVGRPNVGKSTLFNRLVGKKLALVDDTPGVTRDRRPGDARLMGLTFTIIDTAGLEEADAESLQGRMRAQTEAAIDEADLSLFVVDAKSGLTPVDTDLAEMLRRRGKPVVLVANKSEARGSDSGFYDAYTLGLGEPTPISAEHGQGMLDLRDAIVAAIGEDRAYPEKEDVAVTDVDIPQSSDEGDEDEEPIYDDTKPLRVAIVGRPNAGKSTLINRFLGEDRLLTGPEAGITRDSISVEWDWRGRTIKMFDTAGMRRKARVIEKLEKLSVADALRAIRFAETVVIVFDATIPFEKQDLQIVDLVLREGRAAVLAFNKWDMIEDRQAVLADLREKTDRLLPQARGIRAVPISGQTGWGLDKLMQAIIDTDKVWNKRISTARLNRWLETQQVQHPPPAVSGRRIKLKYMTQVKARPPAFMISCTRSDALPESYTRYLINGLRADFDMPSVPIRIHFRSPDNPFEGKKRRT.

2 consecutive EngA-type G domains span residues 3–167 (FTVA…GEDR) and 203–378 (LRVA…KVWN). Residues 9–16 (GRPNVGKS), 56–60 (DTAGL), 119–122 (NKSE), 209–216 (GRPNAGKS), 256–260 (DTAGM), and 321–324 (NKWD) contribute to the GTP site. The 85-residue stretch at 379–463 (KRISTARLNR…PIRIHFRSPD (85 aa)) folds into the KH-like domain.

The protein belongs to the TRAFAC class TrmE-Era-EngA-EngB-Septin-like GTPase superfamily. EngA (Der) GTPase family. As to quaternary structure, associates with the 50S ribosomal subunit.

Its function is as follows. GTPase that plays an essential role in the late steps of ribosome biogenesis. In Rhizobium johnstonii (strain DSM 114642 / LMG 32736 / 3841) (Rhizobium leguminosarum bv. viciae), this protein is GTPase Der.